The chain runs to 202 residues: Cytochrome c biogenesis ATP-binding export protein CcmA (202 aa).

The ABC transporter domain maps to 3-200 (LAAENLSGER…EGTQELKMGA (198 aa)). 35–42 (GPNGAGKS) is a binding site for ATP.

The protein belongs to the ABC transporter superfamily. CcmA exporter (TC 3.A.1.107) family. As to quaternary structure, the complex is composed of two ATP-binding proteins (CcmA) and two transmembrane proteins (CcmB).

Its subcellular location is the cell inner membrane. The catalysed reaction is heme b(in) + ATP + H2O = heme b(out) + ADP + phosphate + H(+). Its function is as follows. Part of the ABC transporter complex CcmAB involved in the biogenesis of c-type cytochromes; once thought to export heme, this seems not to be the case, but its exact role is uncertain. Responsible for energy coupling to the transport system. The chain is Cytochrome c biogenesis ATP-binding export protein CcmA from Chelativorans sp. (strain BNC1).